We begin with the raw amino-acid sequence, 274 residues long: MLSVAARSGPFAPVLSATSRGVAGALRPLVQATVPATPEQPVLDLKRPFLSRESLSGQAVRRPLVASVGLNVPASVCYSHTDVKVPDFSEYRRPEVLDSTKSSRESSEARKGFSYLVTAVTTVGVAYAAKNAVTQFVSSMSASADVLALAKIEIKLSDIPEGKNMAFKWRGKPLFVRHRTQKEIEQEAAVELSQLRDPQHDLDRVKRPEWVILIGVCTHLGCVPIANAGDFGGYYCPCHGSHYDASGRIRLGPAPLNLEVPTYEFTSDDMVIVG.

Over Ser79–Ser103 the chain is Mitochondrial matrix. A helical transmembrane segment spans residues Arg104 to Met140. Residues Ser141–Gly274 lie on the Mitochondrial intermembrane side of the membrane. The 86-residue stretch at Glu187–Ile272 folds into the Rieske domain. Positions 217, 219, 236, 239, and 241 each coordinate [2Fe-2S] cluster. Cysteines 222 and 238 form a disulfide.

It belongs to the Rieske iron-sulfur protein family. Component of the ubiquinol-cytochrome c oxidoreductase (cytochrome b-c1 complex, complex III, CIII), a multisubunit enzyme composed of 11 subunits. The complex is composed of 3 respiratory subunits cytochrome b, cytochrome c1 and Rieske protein UQCRFS1, 2 core protein subunits UQCRC1/QCR1 and UQCRC2/QCR2, and 6 low-molecular weight protein subunits UQCRH/QCR6, UQCRB/QCR7, UQCRQ/QCR8, UQCR10/QCR9, UQCR11/QCR10 and subunit 9, the cleavage product of Rieske protein UQCRFS1. The complex exists as an obligatory dimer and forms supercomplexes (SCs) in the inner mitochondrial membrane with NADH-ubiquinone oxidoreductase (complex I, CI) and cytochrome c oxidase (complex IV, CIV), resulting in different assemblies (supercomplex SCI(1)III(2)IV(1) and megacomplex MCI(2)III(2)IV(2)). Incorporation of the Rieske protein UQCRFS1 is the penultimate step in complex III assembly. Interacts with TTC19, which is involved in the clearance of UQCRFS1 fragments. In terms of assembly, component of the ubiquinol-cytochrome c oxidoreductase (cytochrome b-c1 complex, complex III, CIII). Subunit 9 corresponds to the mitochondrial targeting sequence (MTS) of Rieske protein UQCRFS1. It is retained after processing and incorporated inside complex III, where it remains bound to the complex and localizes between the 2 core subunits UQCRC1/QCR1 and UQCRC2/QCR2. The cofactor is [2Fe-2S] cluster. Post-translationally, proteolytic processing is necessary for the correct insertion of UQCRFS1 in the complex III dimer. Several fragments are generated during UQCRFS1 insertion, most probably due to the endogenous matrix-processing peptidase (MPP) activity of the 2 core protein subunits UQCRC1/QCR1 and UQCRC2/QCR2, which are homologous to the 2 mitochondrial-processing peptidase (MPP) subunits beta-MPP and alpha-MPP respectively. The action of the protease is also necessary for the clearance of the UQCRFS1 fragments.

The protein resides in the mitochondrion inner membrane. The catalysed reaction is a quinol + 2 Fe(III)-[cytochrome c](out) = a quinone + 2 Fe(II)-[cytochrome c](out) + 2 H(+)(out). In terms of biological role, component of the ubiquinol-cytochrome c oxidoreductase, a multisubunit transmembrane complex that is part of the mitochondrial electron transport chain which drives oxidative phosphorylation. The respiratory chain contains 3 multisubunit complexes succinate dehydrogenase (complex II, CII), ubiquinol-cytochrome c oxidoreductase (cytochrome b-c1 complex, complex III, CIII) and cytochrome c oxidase (complex IV, CIV), that cooperate to transfer electrons derived from NADH and succinate to molecular oxygen, creating an electrochemical gradient over the inner membrane that drives transmembrane transport and the ATP synthase. The cytochrome b-c1 complex catalyzes electron transfer from ubiquinol to cytochrome c, linking this redox reaction to translocation of protons across the mitochondrial inner membrane, with protons being carried across the membrane as hydrogens on the quinol. In the process called Q cycle, 2 protons are consumed from the matrix, 4 protons are released into the intermembrane space and 2 electrons are passed to cytochrome c. The Rieske protein is a catalytic core subunit containing a [2Fe-2S] iron-sulfur cluster. It cycles between 2 conformational states during catalysis to transfer electrons from the quinol bound in the Q(0) site in cytochrome b to cytochrome c1. Incorporation of UQCRFS1 is the penultimate step in complex III assembly. Its function is as follows. Component of the ubiquinol-cytochrome c oxidoreductase (cytochrome b-c1 complex, complex III, CIII). UQCRFS1 undergoes proteolytic processing once it is incorporated in the complex III dimer. One of the fragments, called subunit 9, corresponds to its mitochondrial targeting sequence (MTS). The proteolytic processing is necessary for the correct insertion of UQCRFS1 in the complex III dimer, but the persistence of UQCRFS1-derived fragments may prevent newly imported UQCRFS1 to be processed and assembled into complex III and is detrimental for the complex III structure and function. The sequence is that of Cytochrome b-c1 complex subunit Rieske, mitochondrial (UQCRFS1) from Symphalangus syndactylus (Siamang).